We begin with the raw amino-acid sequence, 345 residues long: MATYHHWTVGQALALFDKPLLELLFEAQQVHRQHFDPRQVQVSTLLSIKTGACPEDCKYCPQSSRYKTGLESERLMQVEQVLESAKKAKAAGSTRFCMGAAWKNPHERDMPYLVKMVEGVKALGMETCMTLGSLSKQQAHRLADAGLDYYNHNLDTSPEFYGSIITTRSYQERLDTLNEVRDAGIKVCSGGIVGLGETVRDRAGLLVQLANLPKPPESVPINMLVKVKGTPLENNAEVDAFEFIRTIAVARIMMPSSYVRLSAGREQMNEQTQAMCFMAGANSIFYGCKLLTTPNPDEDNDLQLFRKLGLNPQQTATSHGDREQQQALTEQLLHGDTAQFYNAAV.

The Radical SAM core domain maps to 38-256; the sequence is RQVQVSTLLS…IAVARIMMPS (219 aa). The [4Fe-4S] cluster site is built by C53, C57, and C60. Residues C97, C128, C188, and R260 each coordinate [2Fe-2S] cluster.

This sequence belongs to the radical SAM superfamily. Biotin synthase family. Homodimer. Requires [4Fe-4S] cluster as cofactor. The cofactor is [2Fe-2S] cluster.

The catalysed reaction is (4R,5S)-dethiobiotin + (sulfur carrier)-SH + 2 reduced [2Fe-2S]-[ferredoxin] + 2 S-adenosyl-L-methionine = (sulfur carrier)-H + biotin + 2 5'-deoxyadenosine + 2 L-methionine + 2 oxidized [2Fe-2S]-[ferredoxin]. It participates in cofactor biosynthesis; biotin biosynthesis; biotin from 7,8-diaminononanoate: step 2/2. Catalyzes the conversion of dethiobiotin (DTB) to biotin by the insertion of a sulfur atom into dethiobiotin via a radical-based mechanism. In Yersinia pseudotuberculosis serotype O:1b (strain IP 31758), this protein is Biotin synthase.